Consider the following 429-residue polypeptide: Formate-dependent phosphoribosylglycinamide formyltransferase (429 aa).

N(1)-(5-phospho-beta-D-ribosyl)glycinamide contacts are provided by residues 26-27 (EL) and Glu-86. Residues Arg-118, Lys-159, 199–202 (EEHI), and Glu-207 each bind ATP. Residues 123 to 319 (ETLAREAKVP…EFGLHLRAVL (197 aa)) enclose the ATP-grasp domain. Positions 276 and 288 each coordinate Mg(2+). N(1)-(5-phospho-beta-D-ribosyl)glycinamide is bound by residues Asp-295, Lys-375, and 382–383 (RR).

This sequence belongs to the PurK/PurT family. Homodimer.

It carries out the reaction N(1)-(5-phospho-beta-D-ribosyl)glycinamide + formate + ATP = N(2)-formyl-N(1)-(5-phospho-beta-D-ribosyl)glycinamide + ADP + phosphate + H(+). Its pathway is purine metabolism; IMP biosynthesis via de novo pathway; N(2)-formyl-N(1)-(5-phospho-D-ribosyl)glycinamide from N(1)-(5-phospho-D-ribosyl)glycinamide (formate route): step 1/1. Functionally, involved in the de novo purine biosynthesis. Catalyzes the transfer of formate to 5-phospho-ribosyl-glycinamide (GAR), producing 5-phospho-ribosyl-N-formylglycinamide (FGAR). Formate is provided by PurU via hydrolysis of 10-formyl-tetrahydrofolate. This is Formate-dependent phosphoribosylglycinamide formyltransferase from Thermococcus kodakarensis (strain ATCC BAA-918 / JCM 12380 / KOD1) (Pyrococcus kodakaraensis (strain KOD1)).